The sequence spans 271 residues: MKKITIRDILKMKGKKKIVMVTAYDYPFAKLVDEAGVDIILVGDSAGMVVHGLPSTIPVTMDMMLLHVSSVARAKPRALIVGDMPFLSYEVSIEEAVRNAGLMLKSGAEAVKIEGGSEMVDVIKALVRAGIPVMGHIGLTPQRYLLLGGYRRRGVKEYEAEKIIEDAKELEKAGVFSIVIEFTAADIAEEITKEVSVPTICIGSGPYCDGQVLVLHDLLGIYEEIPPFAKKYADLRRIVIDSVKKYAEEVRNGVFPERKHYFFSKRREAEK.

Mg(2+) is bound by residues Asp44 and Asp83. 3-methyl-2-oxobutanoate contacts are provided by residues 44–45 (DS), Asp83, and Lys112. Glu114 serves as a coordination point for Mg(2+). The active-site Proton acceptor is Glu181.

This sequence belongs to the PanB family. Homodecamer; pentamer of dimers. Mg(2+) is required as a cofactor.

It localises to the cytoplasm. The catalysed reaction is 3-methyl-2-oxobutanoate + (6R)-5,10-methylene-5,6,7,8-tetrahydrofolate + H2O = 2-dehydropantoate + (6S)-5,6,7,8-tetrahydrofolate. The protein operates within cofactor biosynthesis; coenzyme A biosynthesis. Catalyzes the reversible reaction in which hydroxymethyl group from 5,10-methylenetetrahydrofolate is transferred onto alpha-ketoisovalerate to form ketopantoate. The protein is 3-methyl-2-oxobutanoate hydroxymethyltransferase of Staphylothermus marinus (strain ATCC 43588 / DSM 3639 / JCM 9404 / F1).